Here is a 383-residue protein sequence, read N- to C-terminus: Flagellum-associated coiled-coil domain-containing protein 1 (383 aa).

A disordered region spans residues 26-79; it reads PYPLPKHPTGKFKPVLPPPISKEHNSLLSQPGKSTVSPRDKVQSGNTESSKAPS. Positions 51 to 77 are enriched in polar residues; sequence SLLSQPGKSTVSPRDKVQSGNTESSKA. 2 coiled-coil regions span residues 125-220 and 276-359; these read TDII…YLKS and KKMN…FQTK. K354 carries the N6-acetyllysine modification.

As to expression, isoform 1 is specific to germ cells of the testis and localizes to the principal piece of the sperm flagellum. Isoform 2 seems to be expressed mainly in somatic cells of the testis, and is not detected in mature spermatozoa (at protein level). Isoform 2 may also be expressed weakly in brain.

It is found in the cytoplasm. It localises to the cytoplasmic granule. The protein resides in the cell projection. The protein localises to the cilium. Its subcellular location is the flagellum. In Mus musculus (Mouse), this protein is Flagellum-associated coiled-coil domain-containing protein 1.